Reading from the N-terminus, the 214-residue chain is Cell division protein SepF (214 aa).

The tract at residues 24–120 (DNYEEYEERK…NTRRAQESTA (97 aa)) is disordered. Basic and acidic residues predominate over residues 30 to 40 (EERKAVNEPPR). The segment covering 55–67 (ESYSQPAYTQQSE) has biased composition (polar residues). Over residues 69–98 (VVEKPSARYRSAEAHQERDTQQAAYTEKKV) the composition is skewed to basic and acidic residues. The segment covering 101-120 (MRSSNQSATTNTRRAQESTA) has biased composition (polar residues).

Belongs to the SepF family. Homodimer. Interacts with FtsZ.

It is found in the cytoplasm. Its function is as follows. Cell division protein that is part of the divisome complex and is recruited early to the Z-ring. Probably stimulates Z-ring formation, perhaps through the cross-linking of FtsZ protofilaments. Its function overlaps with FtsA. The sequence is that of Cell division protein SepF from Enterococcus faecalis (strain ATCC 700802 / V583).